The sequence spans 436 residues: MGLEDAGDLVLHIVLSKIGPENTARVACVSKRLKVSASEESLWSIFCSNDLNISTPLDPHGDPAPSFKRAYQLWRESFRMYPWNLVKRVRLCWDNLKQWLTLNFPEAKATLRKGVTEDDLQEFETSLKVKLPLPTRLLYRFVDGQELSSPNGLDGSLGLIGGYSAYSHDVNVYLLPLKEVMRETKESFMRDLGFSSRLDLIVMAASVVASLKIFLLDCTTGQLFTGTSNRQLLPCVPDALVRSVHDTNGDQQQDAMLLWLEEHGRRLQTGTINVRQQNNVKSISLFPEIPPLCSVSVTNGVQVRASSVFIPEISNLRDQPPAYWYAYSIRMSLMPEGCILNGTHHSSCQLYWRHWVIRADNEVIDNVNGEAVIGKYPLLQAGEEEFVYESCSSFPTTAGSIDGSFTFVPGSLRDPKGSQFEVKVVEFPLELPDYIF.

The 37-residue stretch at arginine 75–leucine 111 folds into the F-box; degenerate domain. An ApaG domain is found at valine 295–phenylalanine 436.

Part of a SCF (ASK-cullin-F-box) protein ligase complex. Interacts with SKP1A/ASK1, SKP1B/ASK2, ASK4, ASK11 and ASK13.

Its pathway is protein modification; protein ubiquitination. In terms of biological role, component of SCF(ASK-cullin-F-box) E3 ubiquitin ligase complexes, which may mediate the ubiquitination and subsequent proteasomal degradation of target proteins. This Arabidopsis thaliana (Mouse-ear cress) protein is F-box protein SKIP16 (SKIP16).